A 124-amino-acid chain; its full sequence is Small ribosomal subunit protein uS12 (124 aa).

Aspartate 89 carries the 3-methylthioaspartic acid modification. N6-acetyllysine is present on lysine 108.

This sequence belongs to the universal ribosomal protein uS12 family. In terms of assembly, part of the 30S ribosomal subunit. Contacts proteins S8 and S17. May interact with IF1 in the 30S initiation complex.

Its function is as follows. With S4 and S5 plays an important role in translational accuracy. Functionally, interacts with and stabilizes bases of the 16S rRNA that are involved in tRNA selection in the A site and with the mRNA backbone. Located at the interface of the 30S and 50S subunits, it traverses the body of the 30S subunit contacting proteins on the other side and probably holding the rRNA structure together. The combined cluster of proteins S8, S12 and S17 appears to hold together the shoulder and platform of the 30S subunit. The polypeptide is Small ribosomal subunit protein uS12 (Escherichia coli O139:H28 (strain E24377A / ETEC)).